The following is a 73-amino-acid chain: Translation initiation factor IF-1 (73 aa).

The S1-like domain occupies 1–73; the sequence is MAKKDGAIEV…TRGRIVYRYK (73 aa).

The protein belongs to the IF-1 family. As to quaternary structure, component of the 30S ribosomal translation pre-initiation complex which assembles on the 30S ribosome in the order IF-2 and IF-3, IF-1 and N-formylmethionyl-tRNA(fMet); mRNA recruitment can occur at any time during PIC assembly.

It localises to the cytoplasm. Functionally, one of the essential components for the initiation of protein synthesis. Stabilizes the binding of IF-2 and IF-3 on the 30S subunit to which N-formylmethionyl-tRNA(fMet) subsequently binds. Helps modulate mRNA selection, yielding the 30S pre-initiation complex (PIC). Upon addition of the 50S ribosomal subunit IF-1, IF-2 and IF-3 are released leaving the mature 70S translation initiation complex. This Mycolicibacterium gilvum (strain PYR-GCK) (Mycobacterium gilvum (strain PYR-GCK)) protein is Translation initiation factor IF-1.